Reading from the N-terminus, the 411-residue chain is Peptidase T (411 aa).

Position 79 (His79) interacts with Zn(2+). Residue Asp81 is part of the active site. A Zn(2+)-binding site is contributed by Asp142. Catalysis depends on Glu176, which acts as the Proton acceptor. Zn(2+) contacts are provided by Glu177, Asp199, and His381.

This sequence belongs to the peptidase M20B family. The cofactor is Zn(2+).

It is found in the cytoplasm. The enzyme catalyses Release of the N-terminal residue from a tripeptide.. In terms of biological role, cleaves the N-terminal amino acid of tripeptides. In Geobacillus kaustophilus (strain HTA426), this protein is Peptidase T.